Here is a 207-residue protein sequence, read N- to C-terminus: Ras-related protein Rab7A (207 aa).

GTP-binding positions include 15 to 22, 63 to 67, and 125 to 128; these read GDSGVGKT, DTAGQ, and NKID. 2 S-geranylgeranyl cysteine lipidation sites follow: Cys205 and Cys207. Residue Cys207 is modified to Cysteine methyl ester.

It belongs to the small GTPase superfamily. Rab family.

The protein resides in the cell membrane. In terms of biological role, protein transport. Probably involved in vesicular traffic. This chain is Ras-related protein Rab7A, found in Mesembryanthemum crystallinum (Common ice plant).